A 545-amino-acid chain; its full sequence is CTP synthase (545 aa).

The segment at 1 to 266 (MATNYIFVTG…DDFVCERFRL (266 aa)) is amidoligase domain. Serine 14 is a CTP binding site. Serine 14 is a binding site for UTP. ATP contacts are provided by residues 15 to 20 (SLGKGI) and aspartate 72. 2 residues coordinate Mg(2+): aspartate 72 and glutamate 140. CTP-binding positions include 147 to 149 (DIE), 187 to 192 (KTKPTQ), and lysine 223. Residues 187–192 (KTKPTQ) and lysine 223 contribute to the UTP site. 239–241 (KDV) lines the ATP pocket. Residues 291 to 542 (TIGMVGKYTE…VKAAYENHKK (252 aa)) enclose the Glutamine amidotransferase type-1 domain. Glycine 352 serves as a coordination point for L-glutamine. Cysteine 379 serves as the catalytic Nucleophile; for glutamine hydrolysis. L-glutamine-binding positions include 380–383 (LGMQ), glutamate 403, and arginine 470. Catalysis depends on residues histidine 515 and glutamate 517.

It belongs to the CTP synthase family. Homotetramer.

It catalyses the reaction UTP + L-glutamine + ATP + H2O = CTP + L-glutamate + ADP + phosphate + 2 H(+). The enzyme catalyses L-glutamine + H2O = L-glutamate + NH4(+). The catalysed reaction is UTP + NH4(+) + ATP = CTP + ADP + phosphate + 2 H(+). It functions in the pathway pyrimidine metabolism; CTP biosynthesis via de novo pathway; CTP from UDP: step 2/2. With respect to regulation, allosterically activated by GTP, when glutamine is the substrate; GTP has no effect on the reaction when ammonia is the substrate. The allosteric effector GTP functions by stabilizing the protein conformation that binds the tetrahedral intermediate(s) formed during glutamine hydrolysis. Inhibited by the product CTP, via allosteric rather than competitive inhibition. Its function is as follows. Catalyzes the ATP-dependent amination of UTP to CTP with either L-glutamine or ammonia as the source of nitrogen. Regulates intracellular CTP levels through interactions with the four ribonucleotide triphosphates. The sequence is that of CTP synthase from Haemophilus influenzae (strain PittEE).